We begin with the raw amino-acid sequence, 190 residues long: Subtilisin inhibitor CLSI-II (190 aa).

2 disulfide bridges follow: Cys-44–Cys-88 and Cys-142–Cys-149.

This sequence belongs to the protease inhibitor I3 (leguminous Kunitz-type inhibitor) family. In terms of assembly, forms active dimers on storage in aqueous solution, possibly through formation of an intermolecular disulfide bond. The N-terminal Asn is removed in about 50% of both the CLSI-II and CLSI-III chains.

It is found in the secreted. In terms of biological role, inhibits subtilisin-type microbial serine proteases incuding proteinase K, subtilisin BPN', subtilisin Carlsberg and subtilisin E in a non-stoichiometric manner. Weakly inhibits A.oryzae protease and some metalloproteases including pronase E. Does not inhibit trypsin, chymotrypsin, S.griseus alkaline protease or A.lyticus lysyl endopeptidase. CLSI-II has a wider inhibitory specificity than CLSI-III. This is Subtilisin inhibitor CLSI-II from Canavalia lineata (Beach bean).